Here is a 608-residue protein sequence, read N- to C-terminus: Serine/threonine-protein kinase SSN3 (608 aa).

The segment at 1-72 (MSYSSASFRK…PGTVGTRTSI (72 aa)) is disordered. The segment covering 17–47 (SQPSQTTTTTTSANQPQSQSQQQPLQQSQQQ) has biased composition (low complexity). A compositionally biased stretch (basic residues) spans 49–59 (LHMKPNPHIPH). In terms of domain architecture, Protein kinase spans 104–492 (YQIMGYIAAG…ADQALLHPYF (389 aa)). ATP contacts are provided by residues 110-118 (IAAGTYGKV) and K182. Catalysis depends on D307, which acts as the Proton acceptor. The tract at residues 523–608 (MTTAANNNNN…LPGGIRKKRG (86 aa)) is disordered. A compositionally biased stretch (low complexity) spans 528–583 (NNNNNNNNNNNNNNNNNNNNNNNNNNNSGHQLSQQQNVQIQQVHQMQQQIHSQQLQ).

Belongs to the protein kinase superfamily. CMGC Ser/Thr protein kinase family. CDC2/CDKX subfamily. Component of the SRB8-11 complex, a regulatory module of the Mediator complex. Mg(2+) is required as a cofactor.

It localises to the nucleus. It catalyses the reaction L-seryl-[protein] + ATP = O-phospho-L-seryl-[protein] + ADP + H(+). It carries out the reaction L-threonyl-[protein] + ATP = O-phospho-L-threonyl-[protein] + ADP + H(+). The enzyme catalyses [DNA-directed RNA polymerase] + ATP = phospho-[DNA-directed RNA polymerase] + ADP + H(+). In terms of biological role, component of the SRB8-11 complex. The SRB8-11 complex is a regulatory module of the Mediator complex which is itself involved in regulation of basal and activated RNA polymerase II-dependent transcription. The SRB8-11 complex may be involved in the transcriptional repression of a subset of genes regulated by Mediator. It may inhibit the association of the Mediator complex with RNA polymerase II to form the holoenzyme complex. The SRB8-11 complex phosphorylates the C-terminal domain (CTD) of the largest subunit of RNA polymerase II. This Candida albicans (strain SC5314 / ATCC MYA-2876) (Yeast) protein is Serine/threonine-protein kinase SSN3 (SSN3).